Consider the following 160-residue polypeptide: Cytochrome b6-f complex subunit 4 (160 aa).

The next 3 helical transmembrane spans lie at 36 to 56, 95 to 115, and 131 to 151; these read LLYI…GLAV, LLGV…PFLE, and TVFL…TLPI.

It belongs to the cytochrome b family. PetD subfamily. In terms of assembly, the 4 large subunits of the cytochrome b6-f complex are cytochrome b6, subunit IV (17 kDa polypeptide, petD), cytochrome f and the Rieske protein, while the 4 small subunits are petG, petL, petM and petN. The complex functions as a dimer.

The protein resides in the plastid. Its subcellular location is the chloroplast thylakoid membrane. Its function is as follows. Component of the cytochrome b6-f complex, which mediates electron transfer between photosystem II (PSII) and photosystem I (PSI), cyclic electron flow around PSI, and state transitions. The protein is Cytochrome b6-f complex subunit 4 of Oryza nivara (Indian wild rice).